The sequence spans 182 residues: MIEDILEEAEESMKKSINHFKSELAGFRTGRASTSLVEDIKIEYYGSRVPIKQVGNVSVPEPNQILIQVWDQNAISPIEKAIMEQLSLNPARQGNTLRITLPPLTQERRKELVKLLHKTTEEAKVAIRNIRRDAKEMIESLEGISEDEIKRALDKLQKITDHYIDEISNLSSSKEKEITELK.

This sequence belongs to the RRF family.

The protein localises to the cytoplasm. Its function is as follows. Responsible for the release of ribosomes from messenger RNA at the termination of protein biosynthesis. May increase the efficiency of translation by recycling ribosomes from one round of translation to another. The chain is Ribosome-recycling factor from Hydrogenobaculum sp. (strain Y04AAS1).